The chain runs to 189 residues: Apolipoprotein D (189 aa).

The signal sequence occupies residues 1–20 (MVTMLMFLATLAGLFTTAKG). Gln-21 is modified (pyrrolidone carboxylic acid). Disulfide bonds link Cys-28-Cys-134 and Cys-61-Cys-185. N-linked (GlcNAc...) asparagine glycosylation is found at Asn-65 and Asn-98.

The protein belongs to the calycin superfamily. Lipocalin family. As to quaternary structure, homodimer. In terms of tissue distribution, highest levels of expression in brain, testis, virgin mammary gland and salivary gland. Moderate levels in skeletal muscle, lactating mammary gland and thymus. Low levels in lung and lymph node. No expression in kidney, pancreas, liver or spleen.

It localises to the secreted. In terms of biological role, APOD occurs in the macromolecular complex with lecithin-transport and binding of bilin. Appears to be able to transport a variety of ligands in a number of different contexts. The polypeptide is Apolipoprotein D (Apod) (Mus musculus (Mouse)).